Here is a 329-residue protein sequence, read N- to C-terminus: GTP 3',8-cyclase (329 aa).

Residues 8-234 form the Radical SAM core domain; that stretch reads AFARKFYYLR…QLRSRADGPA (227 aa). GTP is bound at residue R17. [4Fe-4S] cluster contacts are provided by C24 and C28. Y30 is an S-adenosyl-L-methionine binding site. C31 serves as a coordination point for [4Fe-4S] cluster. R68 lines the GTP pocket. G72 contacts S-adenosyl-L-methionine. T99 contacts GTP. S123 contributes to the S-adenosyl-L-methionine binding site. K160 is a binding site for GTP. M194 lines the S-adenosyl-L-methionine pocket. Residues C257 and C260 each coordinate [4Fe-4S] cluster. Residue 262–264 participates in GTP binding; the sequence is RLR. C274 contributes to the [4Fe-4S] cluster binding site.

It belongs to the radical SAM superfamily. MoaA family. As to quaternary structure, monomer and homodimer. [4Fe-4S] cluster is required as a cofactor.

The catalysed reaction is GTP + AH2 + S-adenosyl-L-methionine = (8S)-3',8-cyclo-7,8-dihydroguanosine 5'-triphosphate + 5'-deoxyadenosine + L-methionine + A + H(+). It functions in the pathway cofactor biosynthesis; molybdopterin biosynthesis. Its function is as follows. Catalyzes the cyclization of GTP to (8S)-3',8-cyclo-7,8-dihydroguanosine 5'-triphosphate. The sequence is that of GTP 3',8-cyclase from Cronobacter sakazakii (strain ATCC BAA-894) (Enterobacter sakazakii).